The chain runs to 154 residues: Keratin-associated protein 9-9 (154 aa).

A run of 14 repeats spans residues C8–T12, C13–T17, C18–T22, C37–S41, C42–S46, C51–A55, C56–T60, C61–T65, C66–T70, C75–T79, C124–A128, C129–T133, C134–T137, and C148–S152. Residues C8 to S152 are 14 X 5 AA repeats of C-C-[RQVGE]-[SPSTNQ]-[TASL].

Belongs to the KRTAP type 9 family. In terms of assembly, interacts with hair keratins.

In the hair cortex, hair keratin intermediate filaments are embedded in an interfilamentous matrix, consisting of hair keratin-associated proteins (KRTAP), which are essential for the formation of a rigid and resistant hair shaft through their extensive disulfide bond cross-linking with abundant cysteine residues of hair keratins. The matrix proteins include the high-sulfur and high-glycine-tyrosine keratins. This Homo sapiens (Human) protein is Keratin-associated protein 9-9 (KRTAP9-9).